Reading from the N-terminus, the 138-residue chain is Basic phospholipase A2 BP-I (138 aa).

The N-terminal stretch at M1 to G16 is a signal peptide. 7 disulfide bridges follow: C42–C132, C44–C60, C59–C112, C65–C138, C66–C105, C73–C98, and C91–C103. Ca(2+) contacts are provided by G45 and G47. Residue H63 is part of the active site. D106 is an active-site residue.

The protein belongs to the phospholipase A2 family. Group II subfamily. K49 sub-subfamily. The cofactor is Ca(2+). Expressed by the venom gland.

The protein localises to the secreted. It catalyses the reaction a 1,2-diacyl-sn-glycero-3-phosphocholine + H2O = a 1-acyl-sn-glycero-3-phosphocholine + a fatty acid + H(+). Snake venom phospholipase A2 (PLA2) that has strong myotoxic activity with a low phospholipase A2 activity. PLA2 catalyzes the calcium-dependent hydrolysis of the 2-acyl groups in 3-sn-phosphoglycerides. This Protobothrops flavoviridis (Habu) protein is Basic phospholipase A2 BP-I.